We begin with the raw amino-acid sequence, 417 residues long: 3-isopropylmalate dehydratase large subunit (417 aa).

[4Fe-4S] cluster contacts are provided by cysteine 298, cysteine 358, and cysteine 361.

This sequence belongs to the aconitase/IPM isomerase family. LeuC type 2 subfamily. In terms of assembly, heterodimer of LeuC and LeuD. It depends on [4Fe-4S] cluster as a cofactor.

The enzyme catalyses (2R,3S)-3-isopropylmalate = (2S)-2-isopropylmalate. It participates in amino-acid biosynthesis; L-leucine biosynthesis; L-leucine from 3-methyl-2-oxobutanoate: step 2/4. In terms of biological role, catalyzes the isomerization between 2-isopropylmalate and 3-isopropylmalate, via the formation of 2-isopropylmaleate. The protein is 3-isopropylmalate dehydratase large subunit of Thermoanaerobacter pseudethanolicus (strain ATCC 33223 / 39E) (Clostridium thermohydrosulfuricum).